The following is a 145-amino-acid chain: Transcription antitermination protein NusB (145 aa).

This sequence belongs to the NusB family.

Involved in transcription antitermination. Required for transcription of ribosomal RNA (rRNA) genes. Binds specifically to the boxA antiterminator sequence of the ribosomal RNA (rrn) operons. In Aromatoleum aromaticum (strain DSM 19018 / LMG 30748 / EbN1) (Azoarcus sp. (strain EbN1)), this protein is Transcription antitermination protein NusB.